The sequence spans 687 residues: POZ-, AT hook-, and zinc finger-containing protein 1 (687 aa).

The BTB domain occupies 41–130; that stretch reads CDVLLRVGDE…AYTSRIVVRL (90 aa). A Glycyl lysine isopeptide (Lys-Gly) (interchain with G-Cter in SUMO2) cross-link involves residue Lys112. Residues 250–260 show a composition bias toward low complexity; the sequence is PFPSVASSAPP. Positions 250-278 are disordered; the sequence is PFPSVASSAPPLTGKRGRGRPRKANLLDS. The segment at residues 264–276 is a DNA-binding region (a.T hook); the sequence is KRGRGRPRKANLL. A Glycyl lysine isopeptide (Lys-Gly) (interchain with G-Cter in SUMO2) cross-link involves residue Lys272. The residue at position 282 (Ser282) is a Phosphoserine. Residues 292–314 form a C2H2-type 1 zinc finger; that stretch reads LPCGLCGKVFTDANRLRQHEAQH. The disordered stretch occupies residues 332–351; the sequence is GENGLPISEDPDGPRKRSRT. 5 consecutive C2H2-type zinc fingers follow at residues 355 to 377, 383 to 405, 413 to 436, 442 to 464, and 495 to 518; these read VACE…KLSH, YSCP…VRSH, YICQ…KQVH, HKCQ…LACH, and NFCS…KTHH. The span at 549–558 shows a compositional bias: basic and acidic residues; sequence EGQKCSHQDP. A disordered region spans residues 549-603; sequence EGQKCSHQDPIESSDSYGDLSDASDLKTPEKQSANGSFSCDMAVPKNKMESDGEK. The C2H2-type 7 zinc-finger motif lies at 605 to 628; sequence YPCPECGSFFRSKSYLNKHIQKVH.

The protein belongs to the krueppel C2H2-type zinc-finger protein family. As to quaternary structure, homodimer. Interacts with RNF4. Interacts (via C-terminus) with TP53; this interaction inhibits TP53 ability to activate transcription. In terms of tissue distribution, ubiquitous.

Its subcellular location is the nucleus. Transcriptional regulator that plays a role in many biological processes such as embryogenesis, senescence, T-cell development or neurogenesis. Interacts with the TP53 protein to control genes that are important in proliferation and in the DNA-damage response. Mechanistically, the interaction inhibits the DNA binding and transcriptional activity of TP53/p53. Part of the transcriptional network modulating regulatory T-cell development and controls the generation of the regulatory T-cell pool under homeostatic conditions. Functionally, (Microbial infection) Plays a positive role in viral cDNA synthesis. The sequence is that of POZ-, AT hook-, and zinc finger-containing protein 1 (PATZ1) from Homo sapiens (Human).